We begin with the raw amino-acid sequence, 570 residues long: Protein B602L (570 aa).

20 consecutive repeat copies span residues 161 to 164, 165 to 168, 169 to 172, 173 to 176, 177 to 180, 181 to 184, 185 to 188, 189 to 192, 193 to 196, 197 to 200, 201 to 204, 205 to 208, 209 to 212, 213 to 216, 217 to 220, 221 to 224, 225 to 228, 229 to 232, 233 to 236, and 237 to 240. Residues 161–240 are 20 X 4 AA tandem repeats of [CNS]-[ATV]-[DNS]-T; it reads CADTNASTSA…STCASTCANT (80 aa).

The protein belongs to the asfivirus B602L family.

It localises to the host cytoplasm. In terms of biological role, plays an essential role in the assembly of the icosahedral capsid of the virus. Allows the assembly of 3 molecules of hexon protein p72 and formation of a thermostable trimer. The sequence is that of Protein B602L from African swine fever virus (isolate Tick/South Africa/Pretoriuskop Pr4/1996) (ASFV).